The chain runs to 660 residues: Bifunctional polymyxin resistance protein ArnA (660 aa).

Positions 1 to 304 (MKAVIFAYHD…TLGLVAGARL (304 aa)) are formyltransferase ArnAFT. His104 functions as the Proton donor; for formyltransferase activity in the catalytic mechanism. (6R)-10-formyltetrahydrofolate-binding positions include Arg114 and 136 to 140 (VKRAD). The interval 314–660 (RRIRVLILGV…RSVDVAERAS (347 aa)) is dehydrogenase ArnADH. NAD(+) contacts are provided by residues Asp347 and 368–369 (DI). Residues Ala393, Tyr398, and 432–433 (TS) each bind UDP-alpha-D-glucuronate. Catalysis depends on Glu434, which acts as the Proton acceptor; for decarboxylase activity. Residues Arg460, Asn492, 526–535 (KLIDGGQQKR), and Tyr613 contribute to the UDP-alpha-D-glucuronate site. The active-site Proton donor; for decarboxylase activity is the Arg619.

It in the N-terminal section; belongs to the Fmt family. UDP-L-Ara4N formyltransferase subfamily. This sequence in the C-terminal section; belongs to the NAD(P)-dependent epimerase/dehydratase family. UDP-glucuronic acid decarboxylase subfamily. In terms of assembly, homohexamer, formed by a dimer of trimers.

It catalyses the reaction UDP-alpha-D-glucuronate + NAD(+) = UDP-beta-L-threo-pentopyranos-4-ulose + CO2 + NADH. It carries out the reaction UDP-4-amino-4-deoxy-beta-L-arabinose + (6R)-10-formyltetrahydrofolate = UDP-4-deoxy-4-formamido-beta-L-arabinose + (6S)-5,6,7,8-tetrahydrofolate + H(+). It functions in the pathway nucleotide-sugar biosynthesis; UDP-4-deoxy-4-formamido-beta-L-arabinose biosynthesis; UDP-4-deoxy-4-formamido-beta-L-arabinose from UDP-alpha-D-glucuronate: step 1/3. Its pathway is nucleotide-sugar biosynthesis; UDP-4-deoxy-4-formamido-beta-L-arabinose biosynthesis; UDP-4-deoxy-4-formamido-beta-L-arabinose from UDP-alpha-D-glucuronate: step 3/3. The protein operates within bacterial outer membrane biogenesis; lipopolysaccharide biosynthesis. Functionally, bifunctional enzyme that catalyzes the oxidative decarboxylation of UDP-glucuronic acid (UDP-GlcUA) to UDP-4-keto-arabinose (UDP-Ara4O) and the addition of a formyl group to UDP-4-amino-4-deoxy-L-arabinose (UDP-L-Ara4N) to form UDP-L-4-formamido-arabinose (UDP-L-Ara4FN). The modified arabinose is attached to lipid A and is required for resistance to polymyxin and cationic antimicrobial peptides. The protein is Bifunctional polymyxin resistance protein ArnA of Salmonella paratyphi B (strain ATCC BAA-1250 / SPB7).